Consider the following 106-residue polypeptide: L-rhamnose mutarotase (106 aa).

Residue Y20 coordinates substrate. H24 functions as the Proton donor in the catalytic mechanism. Substrate-binding positions include Y43 and 78-79 (WW).

It belongs to the rhamnose mutarotase family. Homodimer.

It localises to the cytoplasm. It catalyses the reaction alpha-L-rhamnose = beta-L-rhamnose. The protein operates within carbohydrate metabolism; L-rhamnose metabolism. Its function is as follows. Involved in the anomeric conversion of L-rhamnose. In Leptothrix cholodnii (strain ATCC 51168 / LMG 8142 / SP-6) (Leptothrix discophora (strain SP-6)), this protein is L-rhamnose mutarotase.